The following is a 429-amino-acid chain: Serine hydroxymethyltransferase (429 aa).

Position 120-122 (120-122 (GHI)) interacts with (6S)-5,6,7,8-tetrahydrofolate. K226 is modified (N6-(pyridoxal phosphate)lysine).

Belongs to the SHMT family. As to quaternary structure, homodimer. The cofactor is pyridoxal 5'-phosphate.

It is found in the cytoplasm. It carries out the reaction 5,10-methylenetetrahydromethanopterin + glycine + H2O = 5,6,7,8-tetrahydromethanopterin + L-serine. The catalysed reaction is L-allo-threonine = acetaldehyde + glycine. It participates in amino-acid biosynthesis; glycine biosynthesis; glycine from L-serine: step 1/1. Catalyzes the reversible interconversion of serine and glycine with tetrahydromethanopterin (H4MPT) serving as the one-carbon carrier. The use of tetrahydrofolate (THF or H4PteGlu) as the pteridine substrate is 450-fold less efficient than that of H4MPT. Also exhibits a pteridine-independent aldolase activity toward beta-hydroxyamino acids, producing glycine and aldehydes, via a retro-aldol mechanism. Thus, is able to catalyze the cleavage of L-allo-threonine and L-threo-beta-phenylserine. This is Serine hydroxymethyltransferase from Methanocaldococcus jannaschii (strain ATCC 43067 / DSM 2661 / JAL-1 / JCM 10045 / NBRC 100440) (Methanococcus jannaschii).